The primary structure comprises 119 residues: Large ribosomal subunit protein uL18 (119 aa).

The protein belongs to the universal ribosomal protein uL18 family. In terms of assembly, part of the 50S ribosomal subunit; part of the 5S rRNA/L5/L18/L25 subcomplex. Contacts the 5S and 23S rRNAs.

Functionally, this is one of the proteins that bind and probably mediate the attachment of the 5S RNA into the large ribosomal subunit, where it forms part of the central protuberance. The chain is Large ribosomal subunit protein uL18 from Cupriavidus necator (strain ATCC 17699 / DSM 428 / KCTC 22496 / NCIMB 10442 / H16 / Stanier 337) (Ralstonia eutropha).